The sequence spans 490 residues: Ribosome biogenesis protein YTM1 (490 aa).

The segment at 1–22 (MDGLEDGPLDASTATSQKPQRQ) is disordered. The tract at residues 23-104 (VRLKLTSRHE…ETTLDVEYVR (82 aa)) is ubiquitin-like (UBL) domain. 7 WD repeats span residues 116–168 (LHDD…IALS), 175–213 (GHTASVKCARMVSPSQIISSGLDRTVRLWKYTESEDGFS), 224–263 (GHKGSVDSISMHAQSHRILSASADHSVGFWSTRKSENPAA), 298–338 (SHTA…LVDT), 340–379 (TASHSLLSVSHMPELSLLASGTSARHITLIDPRASATTVS), 385–425 (GHTN…TDKD), and 449–487 (GEGVKVFDVCWDKSVGIVSSGEDKMIQINRGEGVLPNGG). The disordered stretch occupies residues 255-286 (TRKSENPAAPESLLPSNTSRSSKRRKLNSSVS).

This sequence belongs to the WD repeat WDR12/YTM1 family. Component of the NOP7 complex, composed of ERB1, NOP7 and YTM1. The complex is held together by ERB1, which interacts with NOP7 via its N-terminal domain and with YTM1 via a high-affinity interaction between the seven-bladed beta-propeller domains of the 2 proteins. The NOP7 complex associates with the 66S pre-ribosome. Interacts (via UBL domain) with MDN1 (via VWFA/MIDAS domain).

It localises to the nucleus. The protein resides in the nucleolus. It is found in the nucleoplasm. Its function is as follows. Component of the NOP7 complex, which is required for maturation of the 25S and 5.8S ribosomal RNAs and formation of the 60S ribosome. The sequence is that of Ribosome biogenesis protein YTM1 from Ajellomyces capsulatus (strain NAm1 / WU24) (Darling's disease fungus).